Reading from the N-terminus, the 816-residue chain is Nicotine 6-hydroxylase large subunit (816 aa).

Glutamate 745 contributes to the Mo-molybdopterin cytosine dinucleotide binding site.

The protein belongs to the xanthine dehydrogenase family. As to quaternary structure, heterotrimer composed of a large subunit (NdhL), a medium subunit (NdhM) and a small subunit (NdhS). Mo-molybdopterin cytosine dinucleotide is required as a cofactor.

The protein localises to the cytoplasm. It carries out the reaction (R)-nicotine + A + H2O = (R)-6-hydroxynicotine + AH2. The enzyme catalyses (S)-nicotine + A + H2O = (S)-6-hydroxynicotine + AH2. It participates in alkaloid degradation; nicotine degradation; 6-hydroxypseudooxynicotine from nicotine (R-isomer route): step 1/2. The protein operates within alkaloid degradation; nicotine degradation; 6-hydroxypseudooxynicotine from nicotine (S-isomer route): step 1/2. Its activity is regulated as follows. Nicotine dehydrogenase activity is inhibited by tungsten. Component of the nicotine 6-hydroxylase, which is involved in the degradation of nicotine. Catalyzes the hydroxylation of the pyridine ring at C6 to form 6-hydroxynicotine. Can use both L-nicotine and D-nicotine. The polypeptide is Nicotine 6-hydroxylase large subunit (Paenarthrobacter nicotinovorans (Arthrobacter nicotinovorans)).